A 950-amino-acid polypeptide reads, in one-letter code: MORC family CW-type zinc finger protein 1 (950 aa).

Residues 281–342 (KGKFKTEVQK…TKHKSLRQKQ (62 aa)) adopt a coiled-coil conformation. The segment at 465–530 (SLESLQWRRR…SCNQIERLPS (66 aa)) adopts a CW-type zinc-finger fold. Residues Cys485, Cys488, Cys511, and Cys522 each coordinate Zn(2+). Disordered stretches follow at residues 532 to 551 (PLGTVNRRPPSKDERERQLQ) and 679 to 700 (KKQQSESLVQAGKASTDVASSR). Residues 541–550 (PSKDERERQL) show a composition bias toward basic and acidic residues. Residues 885–916 (LGQCELKRKRTEEKLSDLRAKLALLLQKLQLG) adopt a coiled-coil conformation.

As to expression, expressed at very low level in male germ cells.

Its subcellular location is the nucleus. Required for spermatogenesis. Essential for de novo DNA methylation and silencing of transposable elements in the male embryonic germ cells. Not required for piRNA biosynthesis. In Mus musculus (Mouse), this protein is MORC family CW-type zinc finger protein 1.